The chain runs to 933 residues: Collagen alpha-2(I) chain (933 aa).

Residues 1–16 show a composition bias toward gly residues; sequence SGGFDFGVGLGPGPMG. Disordered regions lie at residues 1 to 191 and 206 to 933; these read SGGF…LTGA and LPGP…AGVR. The segment covering 17–53 has biased composition (low complexity); that stretch reads LMGPRGPPGASGAPGPQGFQGPAGEPGEPGQTGPAGA. 2 positions are modified to 4-hydroxyproline: Pro24 and Pro30. The span at 57–72 shows a compositional bias: basic and acidic residues; the sequence is KAGEDGHPGKPGRPGE. Lys94 carries the post-translational modification 5-hydroxylysine; alternate. O-linked (Gal...) hydroxylysine; alternate glycosylation is present at Lys94. Composition is skewed to low complexity over residues 108-137, 162-176, and 213-228; these read VGAP…SAGP, AGPR…VSGP, and PGPV…RGLV. Gly residues predominate over residues 280–289; the sequence is GLRGGPGSRG. Residues Pro317 and Pro320 each carry the 4-hydroxyproline modification. Positions 413–422 are enriched in gly residues; it reads GVQGGKGEQG. Composition is skewed to low complexity over residues 468–485 and 497–507; these read PGES…SRGP and EPGVVGAPGTA. Over residues 508–517 the composition is skewed to gly residues; that stretch reads GPAGSGGLPG. Low complexity-rich tracts occupy residues 540-584, 591-611, and 627-640; these read VGTT…PRGS, VGPA…QPGA, and PTGP…SGPN. Gly residues predominate over residues 644–656; that stretch reads GPAGGRGDGGPPG. Low complexity predominate over residues 657–667; the sequence is LTGFPGAAGRT. Gly residues predominate over residues 704-713; it reads GETGAGGPPG. Low complexity-rich tracts occupy residues 721 to 748 and 756 to 781; these read SGEP…LGLP and LPGV…RGPS. Basic and acidic residues predominate over residues 795 to 807; the sequence is AGRDGLPGHKGER. Composition is skewed to low complexity over residues 809–831 and 840–860; these read YAGN…VGPA and PGPA…PSGP. Over residues 864 to 874 the composition is skewed to basic and acidic residues; the sequence is RGDKGEGDKGP.

It belongs to the fibrillar collagen family. Trimers of one alpha 2(I) and two alpha 1(I) chains. Interacts (via C-terminus) with TMEM131 (via PapD-L domain); the interaction is direct and is involved in assembly and TRAPPIII ER-to-Golgi transport complex-dependent secretion of collagen. Post-translationally, prolines at the third position of the tripeptide repeating unit (G-X-Y) are hydroxylated in some or all of the chains. Expressed in bones.

It is found in the secreted. Its subcellular location is the extracellular space. It localises to the extracellular matrix. Type I collagen is a member of group I collagen (fibrillar forming collagen). The protein is Collagen alpha-2(I) chain of Glyptodon sp. (strain SLP-2019) (Giant armadillo).